Here is a 515-residue protein sequence, read N- to C-terminus: ATP-dependent rRNA helicase rrp-3 (515 aa).

A disordered region spans residues 1–85; the sequence is MSTKRRKTSD…LDVAPEQEEV (85 aa). Positions 15–24 are enriched in low complexity; sequence LKKAAAPSAP. Residues 25-55 show a composition bias toward basic and acidic residues; it reads ELKKEKKVKDKSTKDKSSTKKTEKTEKKQDA. Over residues 69 to 85 the composition is skewed to acidic residues; the sequence is TEEDSVTLDVAPEQEEV. The Q motif motif lies at 90 to 118; sequence KTFKDLGIVDALCEACERLGYKNPTPIQE. A Helicase ATP-binding domain is found at 121–292; it reads IPLALQNRDI…RASLRDPLKV (172 aa). Residue 134–141 coordinates ATP; sequence AETGSGKT. A DEAD box motif is present at residues 240 to 243; sequence DEAD. The region spanning 316–464 is the Helicase C-terminal domain; the sequence is HKDTYLVYLC…EYPLEKDEVM (149 aa). Residues 482–515 form a disordered region; that stretch reads KSLMENQGKHGGLLKRKRGNGQGGGRDHMDAEEG. Positions 506 to 515 are enriched in basic and acidic residues; it reads GRDHMDAEEG.

The protein belongs to the DEAD box helicase family. DDX47/RRP3 subfamily.

It is found in the nucleus. In terms of biological role, required for pre-ribosomal RNA processing. Involved in the maturation of the 35S-pre-rRNA and to its cleavage to mature 18S rRNA. The protein is ATP-dependent rRNA helicase rrp-3 (rrp-3) of Neurospora crassa (strain ATCC 24698 / 74-OR23-1A / CBS 708.71 / DSM 1257 / FGSC 987).